Here is an 819-residue protein sequence, read N- to C-terminus: Protein O-mannosyl-transferase tmem260 (819 aa).

Residues 1–10 (MNNSPTLSNT) are compositionally biased toward polar residues. The tract at residues 1–68 (MNNSPTLSNT…NNNNNIINVN (68 aa)) is disordered. Over residues 15 to 68 (NNNNNSNSNSNSNNNNNNNNNNNNNSNNNNNNNNNVNRNVNNRNNNNNNIINVN) the composition is skewed to low complexity. Asparagine 18, asparagine 38, and asparagine 70 each carry an N-linked (GlcNAc...) asparagine glycan. Helical transmembrane passes span 113–133 (IACI…TQYP), 152–172 (VAHP…SHII), 185–205 (FMSS…VYLW), 210–230 (WCGL…MYQI), 232–252 (GEVF…GVWY), 285–305 (LTNQ…LMFI), and 316–336 (ILSN…LLFI). Asparagine 349 carries N-linked (GlcNAc...) asparagine glycosylation. Helical transmembrane passes span 391–411 (LIIQ…LNLL), 427–447 (MIIF…NLPI), 459–479 (FFMQ…KSIF), and 505–525 (YLLP…NYNL). N-linked (GlcNAc...) asparagine glycosylation is found at asparagine 531, asparagine 686, asparagine 693, and asparagine 783.

The protein belongs to the glycosyltransferase 117 (GT117) family.

The protein resides in the endoplasmic reticulum membrane. It carries out the reaction a di-trans,poly-cis-dolichyl beta-D-mannosyl phosphate + L-seryl-[protein] = 3-O-(alpha-D-mannosyl)-L-seryl-[protein] + a di-trans,poly-cis-dolichyl phosphate + H(+). The enzyme catalyses a di-trans,poly-cis-dolichyl beta-D-mannosyl phosphate + L-threonyl-[protein] = 3-O-(alpha-D-mannosyl)-L-threonyl-[protein] + a di-trans,poly-cis-dolichyl phosphate + H(+). Functionally, O-mannosyl-transferase that transfers mannosyl residues to the hydroxyl group of serine or threonine residues of proteins. The sequence is that of Protein O-mannosyl-transferase tmem260 from Dictyostelium discoideum (Social amoeba).